The sequence spans 355 residues: Peptide chain release factor 1 (355 aa).

N5-methylglutamine is present on Gln-233.

It belongs to the prokaryotic/mitochondrial release factor family. Post-translationally, methylated by PrmC. Methylation increases the termination efficiency of RF1.

Its subcellular location is the cytoplasm. In terms of biological role, peptide chain release factor 1 directs the termination of translation in response to the peptide chain termination codons UAG and UAA. The sequence is that of Peptide chain release factor 1 from Rickettsia typhi (strain ATCC VR-144 / Wilmington).